A 318-amino-acid chain; its full sequence is NADH-ubiquinone oxidoreductase chain 1 (318 aa).

A run of 8 helical transmembrane segments spans residues 2-22 (FTIN…FLTL), 70-90 (MFII…IPLP), 100-120 (LGVL…LWSG), 146-166 (LAII…STLI), 171-191 (HLWL…STLA), 222-242 (LFFM…TILF), 254-276 (LYTI…IRAS), and 294-314 (LPLT…TSSI).

This sequence belongs to the complex I subunit 1 family. Core subunit of respiratory chain NADH dehydrogenase (Complex I) which is composed of 45 different subunits.

Its subcellular location is the mitochondrion inner membrane. The catalysed reaction is a ubiquinone + NADH + 5 H(+)(in) = a ubiquinol + NAD(+) + 4 H(+)(out). Its function is as follows. Core subunit of the mitochondrial membrane respiratory chain NADH dehydrogenase (Complex I) which catalyzes electron transfer from NADH through the respiratory chain, using ubiquinone as an electron acceptor. Essential for the catalytic activity and assembly of complex I. In Ceratotherium simum (White rhinoceros), this protein is NADH-ubiquinone oxidoreductase chain 1 (MT-ND1).